Consider the following 390-residue polypeptide: Homeobox protein Meis1 (390 aa).

Residues 108–192 form the MEIS N-terminal domain; that stretch reads GGDVCSSESF…IDLVIDDREG (85 aa). Residues 190 to 202 are compositionally biased toward basic and acidic residues; it reads REGGSKSDSEDIT. Residues 190 to 279 are disordered; sequence REGGSKSDSE…KKRHKKRGIF (90 aa). The segment covering 203–213 has biased composition (polar residues); that stretch reads RSANLTDQPSW. The homeobox; TALE-type DNA-binding region spans 272-334; sequence RHKKRGIFPK…NARRRIVQPM (63 aa). The interval 299–329 is interaction with DNA; that stretch reads YPSEEQKKQLAQDTGLTILQVNNWFINARRR. A required for transcriptional activation region spans residues 335–390; it reads IDQSNRAVSQGTPYNPDGQPMGGFVMDGQQHMGIRAPGPMSGMGMNMGMEGQWHYM.

Belongs to the TALE/MEIS homeobox family. In terms of assembly, interacts with the N-terminal region of PBX1 to form a heterodimer which binds DNA including a cAMP-responsive sequence in CYP17. Also forms heterodimers with PBX2. Forms heterotrimers with PBX1 or PBX2 and a number of HOX proteins including HOXA9, HOXD4 and HOXD9 where it acts as a non-DNA-binding partner. Also forms heterotrimers with PBX1 and HOX proteins including HOXD9 and HOXD10 where PBX1 is the non-DNA-binding partner. Heterodimer with DLX3. Heterodimer with HOXB13. Expressed at low level in normal immunohepatopoietic tissues, including the fetal liver. Expressed in a subset of myeloid leukemia cell lines, with the highest expression seen in those with a megakaryocytic-erythroid phenotype. Also expressed at high levels in the cerebellum.

Its subcellular location is the nucleus. In terms of biological role, acts as a transcriptional regulator of PAX6. Acts as a transcriptional activator of PF4 in complex with PBX1 or PBX2. Required for hematopoiesis, megakaryocyte lineage development and vascular patterning. May function as a cofactor for HOXA7 and HOXA9 in the induction of myeloid leukemias. In Homo sapiens (Human), this protein is Homeobox protein Meis1 (MEIS1).